The primary structure comprises 333 residues: Protoheme IX farnesyltransferase (333 aa).

The span at 1–13 shows a compositional bias: low complexity; sequence MVSSTSQIISTSP. Positions 1 to 21 are disordered; that stretch reads MVSSTSQIISTSPSRDDVVPS. 8 helical membrane passes run 38–58, 63–83, 109–129, 132–152, 160–180, 188–208, 245–265, and 286–306; these read LIPLLLATTLGGMALSEGWPL, LACTLGGGALAAAAAGALNCL, AVFTGAISCTLAAAALLVSGV, LAAGLSLLGLCSYVLLYTAFL, IVIGGVAGAIPPLVGAAAATG, WLFALVMVWTPAHFWALAILL, CFGVFALPEGGALYGILLVPF, and AKGLFRWSILYMFGICLLLVV.

Belongs to the UbiA prenyltransferase family. Protoheme IX farnesyltransferase subfamily.

The protein resides in the cell inner membrane. The catalysed reaction is heme b + (2E,6E)-farnesyl diphosphate + H2O = Fe(II)-heme o + diphosphate. Its pathway is porphyrin-containing compound metabolism; heme O biosynthesis; heme O from protoheme: step 1/1. In terms of biological role, converts heme B (protoheme IX) to heme O by substitution of the vinyl group on carbon 2 of heme B porphyrin ring with a hydroxyethyl farnesyl side group. This is Protoheme IX farnesyltransferase from Prochlorococcus marinus (strain SARG / CCMP1375 / SS120).